A 305-amino-acid polypeptide reads, in one-letter code: UDP-3-O-acyl-N-acetylglucosamine deacetylase (305 aa).

Zn(2+)-binding residues include H79, H238, and D242. The Proton donor role is filled by H265.

This sequence belongs to the LpxC family. Requires Zn(2+) as cofactor.

The catalysed reaction is a UDP-3-O-[(3R)-3-hydroxyacyl]-N-acetyl-alpha-D-glucosamine + H2O = a UDP-3-O-[(3R)-3-hydroxyacyl]-alpha-D-glucosamine + acetate. The protein operates within glycolipid biosynthesis; lipid IV(A) biosynthesis; lipid IV(A) from (3R)-3-hydroxytetradecanoyl-[acyl-carrier-protein] and UDP-N-acetyl-alpha-D-glucosamine: step 2/6. Catalyzes the hydrolysis of UDP-3-O-myristoyl-N-acetylglucosamine to form UDP-3-O-myristoylglucosamine and acetate, the committed step in lipid A biosynthesis. The protein is UDP-3-O-acyl-N-acetylglucosamine deacetylase of Shigella boydii serotype 4 (strain Sb227).